We begin with the raw amino-acid sequence, 321 residues long: Lipoyl synthase (321 aa).

7 residues coordinate [4Fe-4S] cluster: Cys68, Cys73, Cys79, Cys94, Cys98, Cys101, and Ser308. In terms of domain architecture, Radical SAM core spans 80-297 (FNHGTATFMI…KALADELGFT (218 aa)).

Belongs to the radical SAM superfamily. Lipoyl synthase family. [4Fe-4S] cluster serves as cofactor.

Its subcellular location is the cytoplasm. The enzyme catalyses [[Fe-S] cluster scaffold protein carrying a second [4Fe-4S](2+) cluster] + N(6)-octanoyl-L-lysyl-[protein] + 2 oxidized [2Fe-2S]-[ferredoxin] + 2 S-adenosyl-L-methionine + 4 H(+) = [[Fe-S] cluster scaffold protein] + N(6)-[(R)-dihydrolipoyl]-L-lysyl-[protein] + 4 Fe(3+) + 2 hydrogen sulfide + 2 5'-deoxyadenosine + 2 L-methionine + 2 reduced [2Fe-2S]-[ferredoxin]. The protein operates within protein modification; protein lipoylation via endogenous pathway; protein N(6)-(lipoyl)lysine from octanoyl-[acyl-carrier-protein]: step 2/2. Functionally, catalyzes the radical-mediated insertion of two sulfur atoms into the C-6 and C-8 positions of the octanoyl moiety bound to the lipoyl domains of lipoate-dependent enzymes, thereby converting the octanoylated domains into lipoylated derivatives. The sequence is that of Lipoyl synthase from Shewanella baltica (strain OS185).